The following is a 428-amino-acid chain: ASTRA-associated protein 1 (428 aa).

WD repeat units lie at residues 15–52 (GHTHPVTSLRFYNAFLVSGDESGWVFWWSLVTRRPLAI), 55–93 (AHHEAILSLVWMDETHLLTQGRDDKLYVWRLELDAQGKS), 122–163 (VNSL…VVWN), 171–209 (GIKTGIVMDLNIMNKKLIVGYEGGAVAVFDISDRNRYTP), 217–259 (SHVQ…EEME), 323–362 (VRHSGLSSLQLDSDGDLIMTAGWDGKVRLFTYDDISKVSV), and 364–418 (HERE…EKTL). The disordered stretch occupies residues 250–295 (DQVVPEEEMEEPEPAKNSERPPSPKIVEVEDSPELEPPKNVVRGFD).

This sequence belongs to the WD repeat ASA1 family. As to quaternary structure, component of the ASTRA chromatin remodeling machinery complex.

It localises to the nucleus. Component of the ASTRA complex involved in chromatin remodeling. This chain is ASTRA-associated protein 1 (ASA1), found in Yarrowia lipolytica (strain CLIB 122 / E 150) (Yeast).